We begin with the raw amino-acid sequence, 445 residues long: Glutamate-1-semialdehyde 2,1-aminomutase (445 aa).

Residue Lys-264 is modified to N6-(pyridoxal phosphate)lysine.

The protein belongs to the class-III pyridoxal-phosphate-dependent aminotransferase family. HemL subfamily. Pyridoxal 5'-phosphate is required as a cofactor.

The protein resides in the cytoplasm. The enzyme catalyses (S)-4-amino-5-oxopentanoate = 5-aminolevulinate. Its pathway is porphyrin-containing compound metabolism; protoporphyrin-IX biosynthesis; 5-aminolevulinate from L-glutamyl-tRNA(Glu): step 2/2. This is Glutamate-1-semialdehyde 2,1-aminomutase from Halobacterium salinarum (strain ATCC 29341 / DSM 671 / R1).